Reading from the N-terminus, the 111-residue chain is MAEDKISAAVLDRLYATVQARKGADPETSYTAKLFHRGTAKIAQKVGEEAVETVIEAVRGDKAAMASESADLLYHLMVLWADAGLEPAAVWEKLAQREGTSGIAEKNARKS.

This sequence belongs to the PRA-PH family.

The protein localises to the cytoplasm. It catalyses the reaction 1-(5-phospho-beta-D-ribosyl)-ATP + H2O = 1-(5-phospho-beta-D-ribosyl)-5'-AMP + diphosphate + H(+). It functions in the pathway amino-acid biosynthesis; L-histidine biosynthesis; L-histidine from 5-phospho-alpha-D-ribose 1-diphosphate: step 2/9. In Azospirillum brasilense, this protein is Phosphoribosyl-ATP pyrophosphatase (hisE).